A 179-amino-acid chain; its full sequence is Acireductone dioxygenase (179 aa).

Positions Met1–Glu12 are enriched in acidic residues. The segment at Met1 to Glu21 is disordered. Residues His88, His90, Glu94, and His133 each coordinate Fe(2+). Ni(2+) is bound by residues His88, His90, Glu94, and His133.

Belongs to the acireductone dioxygenase (ARD) family. Monomer. Interacts with MMP14. It depends on Fe(2+) as a cofactor. Ni(2+) serves as cofactor.

The protein resides in the cytoplasm. The protein localises to the nucleus. Its subcellular location is the cell membrane. The catalysed reaction is 1,2-dihydroxy-5-(methylsulfanyl)pent-1-en-3-one + O2 = 4-methylsulfanyl-2-oxobutanoate + formate + 2 H(+). It carries out the reaction 1,2-dihydroxy-5-(methylsulfanyl)pent-1-en-3-one + O2 = 3-(methylsulfanyl)propanoate + CO + formate + 2 H(+). Its pathway is amino-acid biosynthesis; L-methionine biosynthesis via salvage pathway; L-methionine from S-methyl-5-thio-alpha-D-ribose 1-phosphate: step 5/6. Its function is as follows. Catalyzes 2 different reactions between oxygen and the acireductone 1,2-dihydroxy-3-keto-5-methylthiopentene (DHK-MTPene) depending upon the metal bound in the active site. Fe-containing acireductone dioxygenase (Fe-ARD) produces formate and 2-keto-4-methylthiobutyrate (KMTB), the alpha-ketoacid precursor of methionine in the methionine recycle pathway. Ni-containing acireductone dioxygenase (Ni-ARD) produces methylthiopropionate, carbon monoxide and formate, and does not lie on the methionine recycle pathway. Also down-regulates cell migration mediated by MMP14. This chain is Acireductone dioxygenase, found in Monodelphis domestica (Gray short-tailed opossum).